The chain runs to 81 residues: Small cysteine-rich protein 1 1 (81 aa).

The first 19 residues, 1–19 (MGVHFNICLLLLLVATISS), serve as a signal peptide directing secretion. Positions 20–39 (QTLKATEKDDSTDENPFGIY) are excised as a propeptide.

Belongs to the Cnidaria small cysteine-rich protein (SCRiP) family. alpha subfamily. Post-translationally, the basic myotoxic domain of rattlesnake crotamine toxins (with 6 Cys residues) has been detected in this protein. However, this protein contains 2 additional Cys at the C-terminal region. Hence, this protein may contain 4 disulfide bonds instead of the 3 suggested by the myotoxin domain.

Its subcellular location is the secreted. It localises to the nematocyst. In terms of biological role, induces neurotoxic symptoms on zebrafish. Has also been claimed to be implied in calcification, but tests on homolog proteins suggest that proteins of this family have a neurotoxic function and not a calcification function. The protein is Small cysteine-rich protein 1 1 of Montipora capitata (Rice coral).